The primary structure comprises 146 residues: Hemoglobin subunit beta (146 aa).

The region spanning 2 to 146 (HWTAEEKQLI…VAHALARKYH (145 aa)) is the Globin domain. His63 and His92 together coordinate heme b.

The protein belongs to the globin family. In terms of assembly, heterotetramer of two alpha chains and two beta chains. Red blood cells.

In terms of biological role, involved in oxygen transport from the lung to the various peripheral tissues. This Ciconia ciconia (White stork) protein is Hemoglobin subunit beta (HBB).